Here is a 254-residue protein sequence, read N- to C-terminus: UPF0246 protein Fphi_1075 (254 aa).

This sequence belongs to the UPF0246 family.

The chain is UPF0246 protein Fphi_1075 from Francisella philomiragia subsp. philomiragia (strain ATCC 25017 / CCUG 19701 / FSC 153 / O#319-036).